The following is a 68-amino-acid chain: U2-agatoxin-Ao1u (68 aa).

The first 20 residues, 1–20, serve as a signal peptide directing secretion; it reads MKAIISLLLISAMVFSMIEA. Residues 21–34 constitute a propeptide that is removed on maturation; sequence VPLEEGLQLFEGER. Disulfide bonds link Cys-36–Cys-52, Cys-43–Cys-57, and Cys-51–Cys-67.

It belongs to the neurotoxin 01 (U2-agtx) family. As to expression, expressed by the venom gland.

It localises to the secreted. In terms of biological role, insect active toxin causing rapid but reversible paralysis in crickets. No activity shown in mammals. Does not show effect on mammalian voltage-gated calcium channels. The sequence is that of U2-agatoxin-Ao1u from Agelena orientalis (Funnel-web spider).